Here is a 277-residue protein sequence, read N- to C-terminus: 4-deoxy-L-threo-5-hexosulose-uronate ketol-isomerase (277 aa).

Histidine 195, histidine 197, glutamate 202, and histidine 244 together coordinate Zn(2+).

Belongs to the KduI family. The cofactor is Zn(2+).

It carries out the reaction 5-dehydro-4-deoxy-D-glucuronate = 3-deoxy-D-glycero-2,5-hexodiulosonate. The protein operates within glycan metabolism; pectin degradation; 2-dehydro-3-deoxy-D-gluconate from pectin: step 4/5. Catalyzes the isomerization of 5-dehydro-4-deoxy-D-glucuronate to 3-deoxy-D-glycero-2,5-hexodiulosonate. In Oceanobacillus iheyensis (strain DSM 14371 / CIP 107618 / JCM 11309 / KCTC 3954 / HTE831), this protein is 4-deoxy-L-threo-5-hexosulose-uronate ketol-isomerase.